Here is a 97-residue protein sequence, read N- to C-terminus: Small integral membrane protein 8 (97 aa).

The disordered stretch occupies residues 1-22 (MSSAPEPPAFKKEPPKEKDLGN). The segment covering 9 to 20 (AFKKEPPKEKDL) has biased composition (basic and acidic residues). A helical membrane pass occupies residues 48-70 (PVMAFGLITISLCVAYIGYLHAT).

The protein belongs to the SMIM8 family.

It localises to the membrane. The polypeptide is Small integral membrane protein 8 (SMIM8) (Bos taurus (Bovine)).